Reading from the N-terminus, the 518-residue chain is Retinal dehydrogenase 2 (518 aa).

Residue Tyr168 is modified to Phosphotyrosine. Residues 184–186 (IPW), 210–213 (KPAE), and 264–266 (STE) contribute to the NAD(+) site. Glu286 acts as the Proton acceptor in catalysis. The active-site Nucleophile is the Cys320. Ser351 is modified (phosphoserine). NAD(+) is bound by residues 366–370 (KQYNK) and Glu417.

Belongs to the aldehyde dehydrogenase family. Homotetramer.

The protein localises to the cytoplasm. The enzyme catalyses retinal + NAD(+) + H2O = retinoate + NADH + 2 H(+). It carries out the reaction all-trans-retinal + NAD(+) + H2O = all-trans-retinoate + NADH + 2 H(+). The catalysed reaction is all-trans-13,14-dihydroretinal + NAD(+) + H2O = all-trans-13,14-dihydroretinoate + NADH + 2 H(+). The protein operates within cofactor metabolism; retinol metabolism. Catalyzes the NAD-dependent oxidation of aldehyde substrates, such as all-trans-retinal and all-trans-13,14-dihydroretinal, to their corresponding carboxylic acids, all-trans-retinoate and all-trans-13,14-dihydroretinoate, respectively. Retinoate signaling is critical for the transcriptional control of many genes, for instance it is crucial for initiation of meiosis in both male and female. Recognizes retinal as substrate, both in its free form and when bound to cellular retinol-binding protein. Can metabolize octanal and decanal, but has only very low activity with benzaldehyde, acetaldehyde and propanal. Displays complete lack of activity with citral. This is Retinal dehydrogenase 2 (ALDH1A2) from Homo sapiens (Human).